Consider the following 318-residue polypeptide: tRNA uridine(34) hydroxylase (318 aa).

The Rhodanese domain maps to Gln-125–Lys-219. The Cysteine persulfide intermediate role is filled by Cys-179.

This sequence belongs to the TrhO family.

The enzyme catalyses uridine(34) in tRNA + AH2 + O2 = 5-hydroxyuridine(34) in tRNA + A + H2O. In terms of biological role, catalyzes oxygen-dependent 5-hydroxyuridine (ho5U) modification at position 34 in tRNAs. In Acholeplasma laidlawii (strain PG-8A), this protein is tRNA uridine(34) hydroxylase.